The sequence spans 269 residues: Protein NETWORKED 3A (269 aa).

An NAB domain is found at 6–87 (SKWWWIGNHN…ERYDLLRPSS (82 aa)). A disordered region spans residues 87 to 113 (SVHKHGSDSESHEKSSTCDESSWSEAC). Residues 91–103 (HGSDSESHEKSST) show a composition bias toward basic and acidic residues. Residues 155-214 (NGNSEMMKIEIERLREENKVYSEMVREKDEEKREAIRQMSVAIQMLKEENSELKKRVTNT) are a coiled coil.

Belongs to the NET family.

The protein resides in the cytoplasm. The protein localises to the cytoskeleton. It is found in the nucleus membrane. Functionally, plant-specific actin binding protein. May be part of a membrane-cytoskeletal adapter complex. The sequence is that of Protein NETWORKED 3A from Arabidopsis thaliana (Mouse-ear cress).